The chain runs to 544 residues: CTP synthase (544 aa).

The interval 1-267 (MSKFVFVTGG…GDLLVSRLHL (267 aa)) is amidoligase domain. Residue S13 participates in CTP binding. UTP is bound at residue S13. 14-19 (SVGKGI) is an ATP binding site. Y54 lines the L-glutamine pocket. D71 is a binding site for ATP. Mg(2+) contacts are provided by D71 and E141. CTP is bound by residues 148 to 150 (DIE), 188 to 193 (KTKPTQ), and K224. UTP contacts are provided by residues 188–193 (KTKPTQ) and K224. A Glutamine amidotransferase type-1 domain is found at 299–534 (YVELKDAYYS…INAAKKVIRD (236 aa)). An L-glutamine-binding site is contributed by G354. C381 acts as the Nucleophile; for glutamine hydrolysis in catalysis. Residues 382-385 (LGMQ), E405, and R462 contribute to the L-glutamine site. Active-site residues include H507 and E509.

The protein belongs to the CTP synthase family. As to quaternary structure, homotetramer.

The enzyme catalyses UTP + L-glutamine + ATP + H2O = CTP + L-glutamate + ADP + phosphate + 2 H(+). It catalyses the reaction L-glutamine + H2O = L-glutamate + NH4(+). It carries out the reaction UTP + NH4(+) + ATP = CTP + ADP + phosphate + 2 H(+). Its pathway is pyrimidine metabolism; CTP biosynthesis via de novo pathway; CTP from UDP: step 2/2. Its activity is regulated as follows. Allosterically activated by GTP, when glutamine is the substrate; GTP has no effect on the reaction when ammonia is the substrate. The allosteric effector GTP functions by stabilizing the protein conformation that binds the tetrahedral intermediate(s) formed during glutamine hydrolysis. Inhibited by the product CTP, via allosteric rather than competitive inhibition. Functionally, catalyzes the ATP-dependent amination of UTP to CTP with either L-glutamine or ammonia as the source of nitrogen. Regulates intracellular CTP levels through interactions with the four ribonucleotide triphosphates. This is CTP synthase from Dehalococcoides mccartyi (strain ATCC BAA-2266 / KCTC 15142 / 195) (Dehalococcoides ethenogenes (strain 195)).